We begin with the raw amino-acid sequence, 276 residues long: Pantothenate synthetase (276 aa).

26–33 (MGFLHAGH) contributes to the ATP binding site. H33 (proton donor) is an active-site residue. Q57 contributes to the (R)-pantoate binding site. Beta-alanine is bound at residue Q57. 143–146 (GQKD) provides a ligand contact to ATP. Q149 is a (R)-pantoate binding site. Residues I172 and 180–183 (MSSR) each bind ATP.

Belongs to the pantothenate synthetase family. In terms of assembly, homodimer.

The protein localises to the cytoplasm. The catalysed reaction is (R)-pantoate + beta-alanine + ATP = (R)-pantothenate + AMP + diphosphate + H(+). The protein operates within cofactor biosynthesis; (R)-pantothenate biosynthesis; (R)-pantothenate from (R)-pantoate and beta-alanine: step 1/1. In terms of biological role, catalyzes the condensation of pantoate with beta-alanine in an ATP-dependent reaction via a pantoyl-adenylate intermediate. The chain is Pantothenate synthetase from Herpetosiphon aurantiacus (strain ATCC 23779 / DSM 785 / 114-95).